The sequence spans 387 residues: Radial spoke protein 14 (387 aa).

ARM repeat units follow at residues 24–67, 69–109, 111–150, 154–198, 204–244, 245–286, 289–328, and 330–370; these read KALP…ELLS, PVNH…LLAA, EVGARDLAQHSGLDALAAALEDPSEGVRDEAYGALIEAAR, TRRA…TCTQ, GILS…ALAT, REDA…AITI, EGKYAALESPGGLAGLVSVLDPCHEQLCINAMTAVSNVAE, and PEAR…QCRF.

Belongs to the flagellar radial spoke RSP14 family.

It is found in the cytoplasm. Its subcellular location is the cytoskeleton. It localises to the flagellum axoneme. The polypeptide is Radial spoke protein 14 (RSP14) (Chlamydomonas reinhardtii (Chlamydomonas smithii)).